The following is a 453-amino-acid chain: Cytochrome b-c1 complex subunit 2, mitochondrial (453 aa).

The transit peptide at 1-14 directs the protein to the mitochondrion; the sequence is MKLLSRAGSFSRFY. 3 positions are modified to N6-acetyllysine: K66, K199, and K250. At S368 the chain carries Phosphoserine.

This sequence belongs to the peptidase M16 family. UQCRC2/QCR2 subfamily. Component of the ubiquinol-cytochrome c oxidoreductase (cytochrome b-c1 complex, complex III, CIII), a multisubunit enzyme composed of 11 subunits. The complex is composed of 3 respiratory subunits cytochrome b, cytochrome c1 and Rieske protein UQCRFS1, 2 core protein subunits UQCRC1/QCR1 and UQCRC2/QCR2, and 6 low-molecular weight protein subunits UQCRH/QCR6, UQCRB/QCR7, UQCRQ/QCR8, UQCR10/QCR9, UQCR11/QCR10 and subunit 9, the cleavage product of Rieske protein UQCRFS1. The complex exists as an obligatory dimer and forms supercomplexes (SCs) in the inner mitochondrial membrane with NADH-ubiquinone oxidoreductase (complex I, CI) and cytochrome c oxidase (complex IV, CIV), resulting in different assemblies (supercomplex SCI(1)III(2)IV(1) and megacomplex MCI(2)III(2)IV(2)). Interacts with RAB5IF. Interacts with STMP1. In terms of processing, acetylation of Lys-159 and Lys-250 is observed in liver mitochondria from fasted mice but not from fed mice. Expressed in neurons and astrocytes of the cerebral cortex and hippocampus (at protein level).

Its subcellular location is the mitochondrion inner membrane. In terms of biological role, component of the ubiquinol-cytochrome c oxidoreductase, a multisubunit transmembrane complex that is part of the mitochondrial electron transport chain which drives oxidative phosphorylation. The respiratory chain contains 3 multisubunit complexes succinate dehydrogenase (complex II, CII), ubiquinol-cytochrome c oxidoreductase (cytochrome b-c1 complex, complex III, CIII) and cytochrome c oxidase (complex IV, CIV), that cooperate to transfer electrons derived from NADH and succinate to molecular oxygen, creating an electrochemical gradient over the inner membrane that drives transmembrane transport and the ATP synthase. The cytochrome b-c1 complex catalyzes electron transfer from ubiquinol to cytochrome c, linking this redox reaction to translocation of protons across the mitochondrial inner membrane, with protons being carried across the membrane as hydrogens on the quinol. In the process called Q cycle, 2 protons are consumed from the matrix, 4 protons are released into the intermembrane space and 2 electrons are passed to cytochrome c. The 2 core subunits UQCRC1/QCR1 and UQCRC2/QCR2 are homologous to the 2 mitochondrial-processing peptidase (MPP) subunits beta-MPP and alpha-MPP respectively, and they seem to have preserved their MPP processing properties. May be involved in the in situ processing of UQCRFS1 into the mature Rieske protein and its mitochondrial targeting sequence (MTS)/subunit 9 when incorporated into complex III. The sequence is that of Cytochrome b-c1 complex subunit 2, mitochondrial (Uqcrc2) from Mus musculus (Mouse).